The following is a 212-amino-acid chain: uncharacterized protein (212 aa).

S-adenosyl-L-methionine is bound by residues Gly-53, Glu-74, and Asp-97.

It belongs to the methyltransferase superfamily. YrrT family.

Could be a S-adenosyl-L-methionine-dependent methyltransferase. This is an uncharacterized protein from Bacillus cereus (strain 03BB102).